The primary structure comprises 662 residues: Probable conjugal transfer protein TrbE part 2 (662 aa).

307–314 contributes to the ATP binding site; it reads GPTGSGKS.

The protein belongs to the TrbE/VirB4 family.

This Sinorhizobium fredii (strain NBRC 101917 / NGR234) protein is Probable conjugal transfer protein TrbE part 2 (trbEB).